Reading from the N-terminus, the 448-residue chain is tRNA(Ile)-lysidine synthase (448 aa).

Residue 30-35 (GGGADS) participates in ATP binding.

Belongs to the tRNA(Ile)-lysidine synthase family.

The protein resides in the cytoplasm. It carries out the reaction cytidine(34) in tRNA(Ile2) + L-lysine + ATP = lysidine(34) in tRNA(Ile2) + AMP + diphosphate + H(+). Ligates lysine onto the cytidine present at position 34 of the AUA codon-specific tRNA(Ile) that contains the anticodon CAU, in an ATP-dependent manner. Cytidine is converted to lysidine, thus changing the amino acid specificity of the tRNA from methionine to isoleucine. The chain is tRNA(Ile)-lysidine synthase from Idiomarina loihiensis (strain ATCC BAA-735 / DSM 15497 / L2-TR).